Reading from the N-terminus, the 336-residue chain is Eukaryotic translation initiation factor 3 subunit H (336 aa).

Residues Val21–Ala154 form the MPN domain.

It belongs to the eIF-3 subunit H family. Component of the eukaryotic translation initiation factor 3 (eIF-3) complex.

It is found in the cytoplasm. Functionally, component of the eukaryotic translation initiation factor 3 (eIF-3) complex, which is involved in protein synthesis of a specialized repertoire of mRNAs and, together with other initiation factors, stimulates binding of mRNA and methionyl-tRNAi to the 40S ribosome. The eIF-3 complex specifically targets and initiates translation of a subset of mRNAs involved in cell proliferation. The sequence is that of Eukaryotic translation initiation factor 3 subunit H from Culex quinquefasciatus (Southern house mosquito).